Reading from the N-terminus, the 229-residue chain is MKIGIVGAMAQEVEILKNLMADRTETRVASAVIFEGKINGKDVVLLQSGIGKVAAAIGTTALLQLAKPDLVINTGSAGGVAKGLKVGDIVISDETRYHDADVTAFGYEKGQLPANPAAFLSDKKLADLAQEIAEKQGQSVKRGLICSGDSFINSEDKITQIKADFPNVTGVEMEATAIAQVCYAFNVPFVVVRAISDGGDGKASISFEEFLPLAAKQSSALVLEMIDRL.

Catalysis depends on Glu-12, which acts as the Proton acceptor. Substrate-binding positions include Gly-78, Ile-152, and 173-174 (ME). The Proton donor role is filled by Asp-197.

Belongs to the PNP/UDP phosphorylase family. MtnN subfamily.

It carries out the reaction S-adenosyl-L-homocysteine + H2O = S-(5-deoxy-D-ribos-5-yl)-L-homocysteine + adenine. The enzyme catalyses S-methyl-5'-thioadenosine + H2O = 5-(methylsulfanyl)-D-ribose + adenine. The catalysed reaction is 5'-deoxyadenosine + H2O = 5-deoxy-D-ribose + adenine. Its pathway is amino-acid biosynthesis; L-methionine biosynthesis via salvage pathway; S-methyl-5-thio-alpha-D-ribose 1-phosphate from S-methyl-5'-thioadenosine (hydrolase route): step 1/2. Its function is as follows. Catalyzes the irreversible cleavage of the glycosidic bond in both 5'-methylthioadenosine (MTA) and S-adenosylhomocysteine (SAH/AdoHcy) to adenine and the corresponding thioribose, 5'-methylthioribose and S-ribosylhomocysteine, respectively. Also cleaves 5'-deoxyadenosine, a toxic by-product of radical S-adenosylmethionine (SAM) enzymes, into 5-deoxyribose and adenine. The sequence is that of 5'-methylthioadenosine/S-adenosylhomocysteine nucleosidase from Haemophilus influenzae (strain PittEE).